The sequence spans 718 residues: Kinesin-like protein KIF2C (718 aa).

The segment at 1–248 (MESLPARLFP…CHPLTLTDPT (248 aa)) is globular. Phosphoserine occurs at positions 3 and 19. The segment at 86 to 111 (PKQKRRSVNSKIPAPKEGLRSRSTRM) is disordered. Phosphoserine; by AURKB is present on serine 92. A Microtubule tip localization signal motif is present at residues 95 to 98 (SKIP). Residues serine 106, serine 108, serine 112, serine 163, and serine 186 each carry the phosphoserine modification. Residues 201-232 (EKRAQNSEIRIKRAQEYDSSFPNWEFARMIKE) form a negative regulator of microtubule-binding region. A Kinesin motor domain is found at 252 to 582 (RICVCVRKRP…LRYADRVKEL (331 aa)). ATP-binding positions include arginine 258 and 342 to 349 (GQTGSGKT). Residues 409–412 (KKAK) carry the Nuclear localization signal motif. Phosphoserine occurs at positions 513 and 626. Coiled-coil stretches lie at residues 613 to 651 (NFKE…IIQQ) and 689 to 716 (ALRE…SKKR).

Belongs to the TRAFAC class myosin-kinesin ATPase superfamily. Kinesin family. MCAK/KIF2 subfamily. In terms of assembly, interacts with CENPH. Interacts with MTUS2/TIP150; the interaction is direct. Interacts with MAPRE1; the interaction is direct, regulated by phosphorylation and is probably required for targeting to growing microtubule plus ends. Interacts with KIF18B at microtubule tips; this interaction increases the affinity of both partners for microtubule plus ends and is required for robust microtubule depolymerization. Phosphorylation by AURKA or AURKB strongly reduces KIF18B-binding. In terms of processing, phosphorylation by AURKB, regulates association with centromeres and kinetochores and the microtubule depolymerization activity. Post-translationally, ubiquitinated.

Its subcellular location is the cytoplasm. It is found in the cytoskeleton. The protein localises to the nucleus. It localises to the chromosome. The protein resides in the centromere. Its subcellular location is the kinetochore. In complex with KIF18B, constitutes the major microtubule plus-end depolymerizing activity in mitotic cells. Regulates the turnover of microtubules at the kinetochore and functions in chromosome segregation during mitosis. Plays a role in chromosome congression and is required for the lateral to end-on conversion of the chromosome-microtubule attachment. This Cricetulus griseus (Chinese hamster) protein is Kinesin-like protein KIF2C (KIF2C).